Reading from the N-terminus, the 239-residue chain is Norbelladine 4'-O-methyltransferase 3 (239 aa).

Residues valine 55, glutamate 77, 79–80 (GV), serine 85, aspartate 103, and alanine 132 each bind S-adenosyl-L-methionine. Aspartate 155 provides a ligand contact to a divalent metal cation. Residue aspartate 157 coordinates S-adenosyl-L-methionine. The a divalent metal cation site is built by aspartate 181 and asparagine 182.

Belongs to the class I-like SAM-binding methyltransferase superfamily. Cation-dependent O-methyltransferase family. It depends on Mg(2+) as a cofactor.

The enzyme catalyses norbelladine + S-adenosyl-L-methionine = 4'-O-methylnorbelladine + S-adenosyl-L-homocysteine + H(+). It participates in alkaloid biosynthesis. In terms of biological role, 4'-O-methyltransferase converting norbelladine to 4'-O-methylnorbelladine. 4'-O-methylnorbelladine is a precursor to all Amaryllidaceae alkaloids such as galanthamine, lycorine and haemanthamine, and including haemanthamine- and crinamine-type alkaloids, promising anticancer agents. In Narcissus aff. pseudonarcissus MK-2014 (Daffodil), this protein is Norbelladine 4'-O-methyltransferase 3.